The sequence spans 537 residues: NAD(P)H-quinone oxidoreductase chain 4 3 (537 aa).

The next 13 helical transmembrane spans lie at 6-26 (FPWLTAIIALPLVAALAIPII), 36-56 (WYGLGVAFADFALMIAAFWHY), 87-107 (LSMPLLLLTGLINTLAIFAAW), 115-135 (LFYGLMLVMYSAQLGVFVAQD), 136-156 (LLLFFLMWEIELVPVYLLISI), 169-189 (FILYTAAASIFILVAGFALAF), 209-229 (AIELLAYAGFLIAFGVKLPIF), 243-263 (SAPGSMILAGVLLKMGGYALI), 277-297 (FAPVLAILGVVNIVYGACCAF), 314-334 (MGFVLIGLASYTEIGVSGAVL), 335-355 (QMVSHGLVAASLFFLTGVTYE), 387-407 (LALPGMSGFVGELMVFIGIAT), and 417-437 (VVVVLLSAVGVILTPIYLLSL).

The protein belongs to the complex I subunit 4 family.

The protein resides in the cellular thylakoid membrane. The enzyme catalyses a plastoquinone + NADH + (n+1) H(+)(in) = a plastoquinol + NAD(+) + n H(+)(out). It carries out the reaction a plastoquinone + NADPH + (n+1) H(+)(in) = a plastoquinol + NADP(+) + n H(+)(out). NDH-1 shuttles electrons from NAD(P)H, via FMN and iron-sulfur (Fe-S) centers, to quinones in the respiratory chain. The immediate electron acceptor for the enzyme in this species is believed to be plastoquinone. Couples the redox reaction to proton translocation (for every two electrons transferred, four hydrogen ions are translocated across the cytoplasmic membrane), and thus conserves the redox energy in a proton gradient. In Trichormus variabilis (strain ATCC 29413 / PCC 7937) (Anabaena variabilis), this protein is NAD(P)H-quinone oxidoreductase chain 4 3.